The sequence spans 157 residues: MKLSHLDEKNHPKMVDVSDKNITSRIATASGMIYMSQEAFDVIKNNTAKKGPVLQTAIIAAIMGAKKTSEIIPMCHPLMLSKVETDIMEFVKECAFKLIVTVKCEGKTGVEMEALSGVSIGLLTIYDMIKAIDKSMRITDILLESKEGGKSGKFVRS.

Substrate is bound by residues 74-76 (MCH) and 112-113 (ME). Aspartate 127 is an active-site residue.

Belongs to the MoaC family. In terms of assembly, homohexamer; trimer of dimers.

The catalysed reaction is (8S)-3',8-cyclo-7,8-dihydroguanosine 5'-triphosphate = cyclic pyranopterin phosphate + diphosphate. It functions in the pathway cofactor biosynthesis; molybdopterin biosynthesis. Functionally, catalyzes the conversion of (8S)-3',8-cyclo-7,8-dihydroguanosine 5'-triphosphate to cyclic pyranopterin monophosphate (cPMP). This Campylobacter jejuni subsp. jejuni serotype O:6 (strain 81116 / NCTC 11828) protein is Cyclic pyranopterin monophosphate synthase.